Reading from the N-terminus, the 885-residue chain is DNA mismatch repair protein MutS (885 aa).

Residue 626–633 (GPNMGGKS) participates in ATP binding.

It belongs to the DNA mismatch repair MutS family.

In terms of biological role, this protein is involved in the repair of mismatches in DNA. It is possible that it carries out the mismatch recognition step. This protein has a weak ATPase activity. The sequence is that of DNA mismatch repair protein MutS from Burkholderia lata (strain ATCC 17760 / DSM 23089 / LMG 22485 / NCIMB 9086 / R18194 / 383).